We begin with the raw amino-acid sequence, 507 residues long: ATP synthase subunit alpha, chloroplastic (507 aa).

Position 170-177 (170-177 (GDRQTGKT)) interacts with ATP.

Belongs to the ATPase alpha/beta chains family. As to quaternary structure, F-type ATPases have 2 components, CF(1) - the catalytic core - and CF(0) - the membrane proton channel. CF(1) has five subunits: alpha(3), beta(3), gamma(1), delta(1), epsilon(1). CF(0) has four main subunits: a, b, b' and c.

The protein resides in the plastid. It localises to the chloroplast thylakoid membrane. The catalysed reaction is ATP + H2O + 4 H(+)(in) = ADP + phosphate + 5 H(+)(out). Produces ATP from ADP in the presence of a proton gradient across the membrane. The alpha chain is a regulatory subunit. The sequence is that of ATP synthase subunit alpha, chloroplastic from Oryza nivara (Indian wild rice).